The primary structure comprises 378 residues: Cytochrome b (378 aa).

4 consecutive transmembrane segments (helical) span residues 34 to 54, 78 to 99, 114 to 134, and 179 to 199; these read FGSL…FLAM, WFLR…FIHV, WMIG…GYVL, and FFTF…IHLL. Heme b-binding residues include His-84 and His-98. Heme b is bound by residues His-183 and His-197. His-202 is an a ubiquinone binding site. A run of 4 helical transmembrane segments spans residues 227 to 247, 289 to 309, 321 to 341, and 348 to 368; these read YKDI…IWKF, LGGV…PFTH, LNQI…WIGA, and YVLT…INPL.

This sequence belongs to the cytochrome b family. In terms of assembly, the main subunits of complex b-c1 are: cytochrome b, cytochrome c1 and the Rieske protein. The cofactor is heme b.

It localises to the mitochondrion inner membrane. Functionally, component of the ubiquinol-cytochrome c reductase complex (complex III or cytochrome b-c1 complex) that is part of the mitochondrial respiratory chain. The b-c1 complex mediates electron transfer from ubiquinol to cytochrome c. Contributes to the generation of a proton gradient across the mitochondrial membrane that is then used for ATP synthesis. The sequence is that of Cytochrome b from Aedes aegypti (Yellowfever mosquito).